Reading from the N-terminus, the 163-residue chain is Globin CTT-V (163 aa).

A signal peptide spans 1-16; sequence MKFFAVLTLCIIGAIA. The 146-residue stretch at 18–163 folds into the Globin domain; it reads PLTSDEANLV…YTVAFEVIPA (146 aa). Heme b-binding residues include His-76 and His-111.

This sequence belongs to the globin family.

In Chironomus thummi piger (Midge), this protein is Globin CTT-V (CTT-V).